A 557-amino-acid polypeptide reads, in one-letter code: Protein NRT1/ PTR FAMILY 5.10 (557 aa).

Helical transmembrane passes span 49–67 (FAYY…GPLG) and 79–99 (AWSG…DSFL). Thr-104 carries the phosphothreonine modification. The next 10 helical transmembrane spans lie at 105–125 (ILAA…SAMI), 144–164 (VITF…HKPC), 186–206 (SFFN…LWVL), 215–235 (WALG…VLLL), 320–340 (APIW…PTFF), 365–385 (FISL…IPIA), 401–421 (IGTG…VEMK), 443–463 (VWWL…AMVG), 479–499 (VGLA…SFMI), and 526–546 (YFYW…LYVA).

Belongs to the major facilitator superfamily. Proton-dependent oligopeptide transporter (POT/PTR) (TC 2.A.17) family. In terms of tissue distribution, expressed in shoots, roots and stems. Detected in leaves, flowers and siliques.

It localises to the membrane. The chain is Protein NRT1/ PTR FAMILY 5.10 (NPF5.10) from Arabidopsis thaliana (Mouse-ear cress).